We begin with the raw amino-acid sequence, 289 residues long: Energy-coupling factor transporter ATP-binding protein EcfA2 (289 aa).

The ABC transporter domain occupies 3–246 (IEIKDVEHRY…KDDIAALGLD (244 aa)). 40 to 47 (GHTGSGKS) provides a ligand contact to ATP.

It belongs to the ABC transporter superfamily. Energy-coupling factor EcfA family. As to quaternary structure, forms a stable energy-coupling factor (ECF) transporter complex composed of 2 membrane-embedded substrate-binding proteins (S component), 2 ATP-binding proteins (A component) and 2 transmembrane proteins (T component).

It is found in the cell membrane. ATP-binding (A) component of a common energy-coupling factor (ECF) ABC-transporter complex. Unlike classic ABC transporters this ECF transporter provides the energy necessary to transport a number of different substrates. This Bacillus licheniformis (strain ATCC 14580 / DSM 13 / JCM 2505 / CCUG 7422 / NBRC 12200 / NCIMB 9375 / NCTC 10341 / NRRL NRS-1264 / Gibson 46) protein is Energy-coupling factor transporter ATP-binding protein EcfA2.